A 3084-amino-acid polypeptide reads, in one-letter code: Protein prune homolog 2 (3084 aa).

Met-1 bears the N-acetylmethionine mark. A DHH motif motif is present at residues 109–111 (GSH). 18 disordered regions span residues 394-417 (QPSS…QADG), 430-465 (TIRS…PGFD), 500-536 (ASEQ…PKGL), 672-733 (EQES…QKEE), 811-837 (KNTW…MGQS), 861-907 (EIWG…KATG), 947-1080 (SASN…DDPS), 1224-1316 (NMPS…GQSE), 1338-1395 (SGVN…LEVE), 1502-1543 (MNST…DLHD), 1600-1652 (GFGK…TTKR), 1776-1799 (ETGT…DPDK), 1836-1886 (GELE…GDKS), 1961-1980 (DENG…QENQ), 2071-2196 (ILTH…NPEV), 2410-2782 (MLLS…SHPR), 2797-2816 (QSEG…EIDI), and 2825-2859 (DEAD…AEEE). The segment covering 501-511 (SEQSQPSSHSA) has biased composition (polar residues). 2 stretches are compositionally biased toward basic and acidic residues: residues 682–696 (PWKD…RRTS) and 723–733 (GNKEAQDQKEE). Polar residues-rich tracts occupy residues 811 to 828 (KNTW…SGQE) and 865 to 891 (KNNS…NNSK). Positions 962–975 (TNYSTSDSYTSPTY) are enriched in low complexity. Over residues 977-999 (GDEKEIANKPVDKDNGFEAKDAE) the composition is skewed to basic and acidic residues. The segment covering 1009-1019 (ATSSQQSQRNR) has biased composition (polar residues). Over residues 1034-1063 (HTEDKPEGNDAHHPDSDALKTEHAEDKNAS) the composition is skewed to basic and acidic residues. Low complexity predominate over residues 1071 to 1080 (SSPSSYDDPS). Residues 1248–1261 (SPRHSNGKDSHMLE) are compositionally biased toward basic and acidic residues. Over residues 1265 to 1294 (LSESGGLTSQPVNQDTWGDSQGDTASSVTG) the composition is skewed to polar residues. Over residues 1350 to 1366 (KPRDQEFSSSDAFEHQD) the composition is skewed to basic and acidic residues. Over residues 1368–1378 (SSASGKISSLS) the composition is skewed to low complexity. 3 stretches are compositionally biased toward polar residues: residues 1779 to 1792 (TMDT…STEA), 1854 to 1869 (PIQN…STNP), and 1965 to 1980 (CVST…QENQ). Basic and acidic residues predominate over residues 2089–2103 (VCHDSEGEQKMEKHT). Low complexity predominate over residues 2162–2174 (SSKPASSRSSPEP). Basic and acidic residues-rich tracts occupy residues 2416-2428 (PDHR…ETNI), 2506-2525 (KQTE…EDHQ), and 2535-2553 (SHEK…RENI). Residues 2569–2584 (PETQLSGTPDTCQSEF) show a composition bias toward polar residues. Positions 2595 to 2606 (RMSSSSNHESAS) are enriched in low complexity. The span at 2607–2617 (LENPAQDQSWM) shows a compositional bias: polar residues. Over residues 2653–2664 (KGPKSQVLERNK) the composition is skewed to basic and acidic residues. A compositionally biased stretch (acidic residues) spans 2806–2816 (DNLDSPDEIDI). The span at 2840-2849 (ANKSSGQESE) shows a compositional bias: polar residues. The CRAL-TRIO domain maps to 2879 to 3040 (DMKVIEPYRR…SIIKYDEEKS (162 aa)).

This sequence belongs to the PPase class C family. Prune subfamily.

The protein resides in the cytoplasm. In terms of biological role, may play an important role in regulating differentiation, survival and aggressiveness of the tumor cells. This chain is Protein prune homolog 2 (Prune2), found in Mus musculus (Mouse).